Consider the following 372-residue polypeptide: Ciliary neurotrophic factor receptor subunit alpha (372 aa).

A signal peptide spans 1–22; sequence MAAPVPWACCAVLAAAAAVVYA. The region spanning 27 to 104 is the Ig-like C2-type domain; that stretch reads PQEAPHVQYE…WHLRHQVLLH (78 aa). The cysteines at positions 46 and 89 are disulfide-linked. 4 N-linked (GlcNAc...) asparagine glycosylation sites follow: N60, N70, N142, and N190. 2 Fibronectin type-III domains span residues 108–205 and 206–306; these read PPRE…VKPD and PPEN…TEEP. Residues 290 to 294 carry the WSXWS motif motif; the sequence is WSDWS. Residues 301–340 form a disordered region; that stretch reads PWTEEPRHLTTEAQAAETTTSTTSSLAPPPTTKICDPGEL. Residues 311 to 326 are compositionally biased toward low complexity; the sequence is TEAQAAETTTSTTSSL. S342 carries the GPI-anchor amidated serine lipid modification. Residues 343 to 372 constitute a propeptide, removed in mature form; sequence GGGPSAPFLVSVPITLALAAAAATASSLLI.

This sequence belongs to the type I cytokine receptor family. Type 3 subfamily. As to quaternary structure, forms a heterotrimer with LIFR and IL6ST. Interacts with heterodimeric neurotropic cytokine composed of CLCF1/CLC and CRLF1/CLF-1. Either alone or in complex with the heterodimer CLCF1-CRLF1 interacts with SORL1; this interaction may promote internalization and lysosomal degradation. Component of a receptor complex composed of IL6ST/GP130, IL27RA/WSX1 and CNTFR which interacts with the neuroprotective peptide humanin. As to expression, nervous system and skeletal muscle.

It localises to the cell membrane. Its function is as follows. Binds to CNTF. The alpha subunit provides the receptor specificity. Receptor for heterodimeric neurotropic cytokine composed of CLCF1/CLC and CRLF1/CLF-1. Acts as a receptor for the neuroprotective peptide humanin as part of a complex with IL6ST/GP130 and IL27RA/WSX1. This Homo sapiens (Human) protein is Ciliary neurotrophic factor receptor subunit alpha (CNTFR).